The following is a 1123-amino-acid chain: Translation initiation factor IF-2 (1123 aa).

Disordered stretches follow at residues 52 to 452 (LLKA…KVHI) and 480 to 512 (LARP…RQRQ). Low complexity-rich tracts occupy residues 54-73 (KAGS…PGKA), 94-113 (KPAA…AKSP), and 121-133 (AAPS…KASA). Over residues 170–187 (PPSPPARPVPQQPSPPSA) the composition is skewed to pro residues. Over residues 193–206 (APIRRAAPNDAPRP) the composition is skewed to low complexity. Composition is skewed to pro residues over residues 207–217 (ANAPPSRPQPK) and 258–268 (SPRPAVSPRPS). Residues 285-304 (RPGAPTRPGTGAGRPSRPGG) show a composition bias toward low complexity. Gly residues predominate over residues 320–339 (GNRGEGGRPPGGARPAGGGN). Over residues 388 to 403 (ATPPVSRPTATPPSPA) the composition is skewed to pro residues. Residues 412 to 422 (FRPGAGPGGQR) show a composition bias toward gly residues. The span at 425–439 (GRPDWDDSAKLDALR) shows a compositional bias: basic and acidic residues. The span at 486-499 (PKSQQKAAPKPVAA) shows a compositional bias: low complexity. Over residues 500–512 (MRKRRKETTRQRQ) the composition is skewed to basic residues. The tr-type G domain maps to 615–787 (RRPPVVTVMG…LLLVTEVEDL (173 aa)). The G1 stretch occupies residues 624 to 631 (GHVDHGKT). 624–631 (GHVDHGKT) lines the GTP pocket. The tract at residues 649–653 (GITQH) is G2. Residues 674-677 (DTPG) form a G3 region. GTP contacts are provided by residues 674–678 (DTPGH) and 728–731 (NKID). A G4 region spans residues 728-731 (NKID). Residues 764-766 (SAI) are G5.

It belongs to the TRAFAC class translation factor GTPase superfamily. Classic translation factor GTPase family. IF-2 subfamily.

The protein resides in the cytoplasm. Functionally, one of the essential components for the initiation of protein synthesis. Protects formylmethionyl-tRNA from spontaneous hydrolysis and promotes its binding to the 30S ribosomal subunits. Also involved in the hydrolysis of GTP during the formation of the 70S ribosomal complex. The polypeptide is Translation initiation factor IF-2 (Synechococcus sp. (strain WH7803)).